Here is a 131-residue protein sequence, read N- to C-terminus: Aspartate 1-decarboxylase (131 aa).

Ser25 acts as the Schiff-base intermediate with substrate; via pyruvic acid in catalysis. A Pyruvic acid (Ser) modification is found at Ser25. A substrate-binding site is contributed by Thr57. Catalysis depends on Tyr58, which acts as the Proton donor. A substrate-binding site is contributed by 73-75; it reads GAA. The disordered stretch occupies residues 112 to 131; it reads NVPTTQKSENPGQGSLRNAI. Polar residues predominate over residues 113 to 131; sequence VPTTQKSENPGQGSLRNAI.

Belongs to the PanD family. As to quaternary structure, heterooctamer of four alpha and four beta subunits. Pyruvate is required as a cofactor. In terms of processing, is synthesized initially as an inactive proenzyme, which is activated by self-cleavage at a specific serine bond to produce a beta-subunit with a hydroxyl group at its C-terminus and an alpha-subunit with a pyruvoyl group at its N-terminus.

It is found in the cytoplasm. The enzyme catalyses L-aspartate + H(+) = beta-alanine + CO2. It functions in the pathway cofactor biosynthesis; (R)-pantothenate biosynthesis; beta-alanine from L-aspartate: step 1/1. Functionally, catalyzes the pyruvoyl-dependent decarboxylation of aspartate to produce beta-alanine. This chain is Aspartate 1-decarboxylase, found in Syntrophotalea carbinolica (strain DSM 2380 / NBRC 103641 / GraBd1) (Pelobacter carbinolicus).